The chain runs to 90 residues: Co-chaperonin GroES (90 aa).

It belongs to the GroES chaperonin family. In terms of assembly, heptamer of 7 subunits arranged in a ring. Interacts with the chaperonin GroEL.

It is found in the cytoplasm. In terms of biological role, together with the chaperonin GroEL, plays an essential role in assisting protein folding. The GroEL-GroES system forms a nano-cage that allows encapsulation of the non-native substrate proteins and provides a physical environment optimized to promote and accelerate protein folding. GroES binds to the apical surface of the GroEL ring, thereby capping the opening of the GroEL channel. This Bacteroides fragilis (strain ATCC 25285 / DSM 2151 / CCUG 4856 / JCM 11019 / LMG 10263 / NCTC 9343 / Onslow / VPI 2553 / EN-2) protein is Co-chaperonin GroES.